The chain runs to 254 residues: 4-hydroxy-tetrahydrodipicolinate reductase (254 aa).

NAD(+)-binding positions include 10–15 (GATGKV) and 101–103 (GTT). Histidine 157 functions as the Proton donor/acceptor in the catalytic mechanism. Histidine 158 is a binding site for (S)-2,3,4,5-tetrahydrodipicolinate. Lysine 161 serves as the catalytic Proton donor. 167 to 168 (GT) contributes to the (S)-2,3,4,5-tetrahydrodipicolinate binding site.

The protein belongs to the DapB family.

The protein localises to the cytoplasm. The catalysed reaction is (S)-2,3,4,5-tetrahydrodipicolinate + NAD(+) + H2O = (2S,4S)-4-hydroxy-2,3,4,5-tetrahydrodipicolinate + NADH + H(+). It catalyses the reaction (S)-2,3,4,5-tetrahydrodipicolinate + NADP(+) + H2O = (2S,4S)-4-hydroxy-2,3,4,5-tetrahydrodipicolinate + NADPH + H(+). It functions in the pathway amino-acid biosynthesis; L-lysine biosynthesis via DAP pathway; (S)-tetrahydrodipicolinate from L-aspartate: step 4/4. In terms of biological role, catalyzes the conversion of 4-hydroxy-tetrahydrodipicolinate (HTPA) to tetrahydrodipicolinate. This Symbiobacterium thermophilum (strain DSM 24528 / JCM 14929 / IAM 14863 / T) protein is 4-hydroxy-tetrahydrodipicolinate reductase.